We begin with the raw amino-acid sequence, 999 residues long: Hypoxia up-regulated protein 1 (999 aa).

A signal peptide spans 1-32 (MAATVRRQRPRRLLCWALVAVLLADLLALSDT). N-linked (GlcNAc...) asparagine glycosylation is found at N155, N222, and N515. Residue S567 is modified to Phosphoserine. The tract at residues 567 to 694 (SPEEESTLTK…KKPKPARKQK (128 aa)) is disordered. The span at 574–583 (LTKLGNTISS) shows a compositional bias: polar residues. N596 carries N-linked (GlcNAc...) asparagine glycosylation. 2 stretches are compositionally biased toward basic and acidic residues: residues 611-626 (GSKD…KEEA) and 641-668 (PKGD…KPNE). Positions 669 to 680 (KGQAGPEGAAPA) are enriched in low complexity. N-linked (GlcNAc...) asparagine glycosylation is found at N830, N862, and N869. At K883 the chain carries N6-acetyllysine. Residues 909-999 (AKFTKPRPRP…QKRPSKNDEL (91 aa)) form a disordered region. Residues N922 and N931 are each glycosylated (N-linked (GlcNAc...) asparagine). Residues 949–962 (EEAKPILEPDKEET) show a composition bias toward basic and acidic residues. Residues 996 to 999 (NDEL) carry the Prevents secretion from ER motif.

The protein belongs to the heat shock protein 70 family. As to quaternary structure, part of a large chaperone multiprotein complex comprising DNAJB11, HSP90B1, HSPA5, HYOU, PDIA2, PDIA4, PDIA6, PPIB, SDF2L1, UGGT1 and very small amounts of ERP29, but not, or at very low levels, CALR nor CANX.

The protein localises to the endoplasmic reticulum lumen. In terms of biological role, has a pivotal role in cytoprotective cellular mechanisms triggered by oxygen deprivation. Promotes HSPA5/BiP-mediated ATP nucleotide exchange and thereby activates the unfolded protein response (UPR) pathway in the presence of endoplasmic reticulum stress. May play a role as a molecular chaperone and participate in protein folding. This chain is Hypoxia up-regulated protein 1 (Hyou1), found in Mus musculus (Mouse).